Here is a 470-residue protein sequence, read N- to C-terminus: Proton-coupled amino acid transporter 3 (470 aa).

The Cytoplasmic segment spans residues 1–46 (MSLLGRDYNSELNSLDNGPQSPSESSSSITSENVHPAGEAGLSMMQ). Over residues 10–20 (SELNSLDNGPQ) the composition is skewed to polar residues. Residues 10–33 (SELNSLDNGPQSPSESSSSITSEN) form a disordered region. The span at 21–31 (SPSESSSSITS) shows a compositional bias: low complexity. A helical transmembrane segment spans residues 47–67 (TLIHLLKCNIGTGLLGLPLAI). Over 68-71 (KNAG) the chain is Extracellular. Residues 72-92 (LLVGPVSLLAIGVLTVHCMVI) form a helical membrane-spanning segment. The Cytoplasmic portion of the chain corresponds to 93 to 137 (LLNCAQHLSQRLQKTFVNYGEATMYGLETCPNTWLRAHAVWGRYT). Residues 138-158 (VSFLLVITQLGFCSVYFMFMA) form a helical membrane-spanning segment. At 159 to 185 (DNLQQMVEKAHVTSNICQPREILTLTP) the chain is on the extracellular side. Residues 186 to 206 (ILDIRFYMLIILPFLILLVFI) form a helical membrane-spanning segment. At 207–210 (QNLK) the chain is on the cytoplasmic side. Residues 211 to 231 (VLSVFSTLANITTLGSMALIF) form a helical membrane-spanning segment. Residues 232-252 (EYIMEGIPYPSNLPLMANWKT) are Extracellular-facing. Residues 253 to 273 (FLLFFGTAIFTFEGVGMVLPL) form a helical membrane-spanning segment. The Cytoplasmic segment spans residues 274–284 (KNQMKHPQQFS). A helical transmembrane segment spans residues 285–305 (FVLYLGMSIVIILYILLGTLG). At 306-337 (YMKFGSDTQASITLNLPNCWLYQSVKLMYSIG) the chain is on the extracellular side. A helical transmembrane segment spans residues 338 to 358 (IFFTYALQFHVPAEIIIPFAI). The Cytoplasmic portion of the chain corresponds to 359–367 (SQVSESWAL). The chain crosses the membrane as a helical span at residues 368 to 388 (FVDLSVRSALVCLTCVSAILI). At 389–392 (PRLD) the chain is on the extracellular side. The helical transmembrane segment at 393–413 (LVISLVGSVSSSALALIIPAL) threads the bilayer. At 414–425 (LEIVIFYSEDMS) the chain is on the cytoplasmic side. A helical membrane pass occupies residues 426-446 (CVTIAKDIMISIVGLLGCIFG). Over 447–470 (TYQALYELPQPISHSMANSTGVHA) the chain is Extracellular.

It belongs to the amino acid/polyamine transporter 2 family. In terms of tissue distribution, specifically expressed in testis.

Its subcellular location is the membrane. The sequence is that of Proton-coupled amino acid transporter 3 (SLC36A3) from Homo sapiens (Human).